Consider the following 248-residue polypeptide: Protein FAM133A (248 aa).

Positions 68 to 80 (NWKKELEKSREKL) are enriched in basic and acidic residues. The interval 68-248 (NWKKELEKSR…KKSGSSHKSR (181 aa)) is disordered. Basic residues predominate over residues 90 to 102 (KRERKKKRKKKSC). The span at 103 to 118 (RSSSSSSSSDSSSSSS) shows a compositional bias: low complexity. The span at 127–138 (QGKRRKKKKNRS) shows a compositional bias: basic residues. 3 stretches are compositionally biased toward basic and acidic residues: residues 147–156 (HESESESKES), 163–175 (SKDE…DVRS), and 211–220 (RCEEREQAKE). A compositionally biased stretch (basic residues) spans 221–248 (KVKKKKKKQHKKHSKKKKKKSGSSHKSR).

This sequence belongs to the FAM133 family.

This chain is Protein FAM133A (FAM133A), found in Homo sapiens (Human).